We begin with the raw amino-acid sequence, 444 residues long: P2X purinoceptor 5 (444 aa).

At 1-30 (MGQAGCKGLCLSLFDYKTEKYVIAKNKKVG) the chain is on the cytoplasmic side. Residues 31-51 (LLYRLLQASILAYLVVWVFLI) form a helical membrane-spanning segment. Over 52-319 (KKGYQDVDTS…RTLMKAYGIR (268 aa)) the chain is Extracellular. N-linked (GlcNAc...) asparagine glycosylation is present at asparagine 77. 3 disulfides stabilise this stretch: cysteine 118/cysteine 169, cysteine 129/cysteine 152, and cysteine 135/cysteine 163. Asparagine 202 is a glycosylation site (N-linked (GlcNAc...) asparagine). 2 disulfides stabilise this stretch: cysteine 220–cysteine 229 and cysteine 263–cysteine 272. The chain crosses the membrane as a helical span at residues 320–362 (FDVMVNGKAGKFSIIPTIINVGSGVALMGAGAFFCDLVLIYLI). Topologically, residues 363-444 (KKREFYRDKK…PQLLEPHRST (82 aa)) are cytoplasmic. The interval 378–444 (GLEDSSQEAE…PQLLEPHRST (67 aa)) is disordered.

The protein belongs to the P2X receptor family. In terms of assembly, functional P2XRs are organized as homomeric and heteromeric trimers. Homotrimer. Forms heterotrimer with P2RX1. As to expression, expressed at high levels in brain and immune system.

It is found in the cell membrane. It carries out the reaction Na(+)(in) = Na(+)(out). It catalyses the reaction Ca(2+)(in) = Ca(2+)(out). The enzyme catalyses chloride(in) = chloride(out). Its activity is regulated as follows. Activated by ATP. Slowly desensitizing. Sensitive to the ATP agonist alpha/beta-methylene-ATP. Functionally, ATP-gated nonselective transmembrane cation channel permeable to potassium, sodium and calcium. Unlike other P2RX receptors, the P2X5 receptor is also permeable to chloride. May play a supporting role in the inflammatory response. Non-functional. This Homo sapiens (Human) protein is P2X purinoceptor 5.